The chain runs to 70 residues: Putative defensin-like protein 73 (70 aa).

The first 29 residues, 1 to 29 (MNCKIEFMSFLVMTSIVILFLFVSGKVEA), serve as a signal peptide directing secretion. 4 disulfides stabilise this stretch: Cys-33–Cys-68, Cys-37–Cys-57, Cys-43–Cys-66, and Cys-47–Cys-67.

The protein belongs to the DEFL family.

The protein resides in the secreted. This chain is Putative defensin-like protein 73 (LCR44), found in Arabidopsis thaliana (Mouse-ear cress).